A 153-amino-acid chain; its full sequence is Pheromone-binding protein Gp-9 (153 aa).

Positions 1 to 19 (MKTFVLHIFIFAFVAFASA) are cleaved as a signal peptide. Cystine bridges form between Cys-37-Cys-77, Cys-73-Cys-129, and Cys-118-Cys-138.

The protein belongs to the PBP/GOBP family. In terms of assembly, homodimer.

It localises to the secreted. Functionally, colony queen number, a major feature of social organization, is associated with worker genotype for Gp-9. Colonies are headed by either a single reproductive queen (monogyne form) or multiple queens (polygyne form). Differences in worker Gp-9 genotypes between social forms may cause differences in workers' abilities to recognize queens and regulate their numbers. The polypeptide is Pheromone-binding protein Gp-9 (Solenopsis amblychila (Desert fire ant)).